A 93-amino-acid chain; its full sequence is UPF0250 protein PA3998 (93 aa).

The protein belongs to the UPF0250 family.

The sequence is that of UPF0250 protein PA3998 from Pseudomonas aeruginosa (strain ATCC 15692 / DSM 22644 / CIP 104116 / JCM 14847 / LMG 12228 / 1C / PRS 101 / PAO1).